The following is a 444-amino-acid chain: tRNA-2-methylthio-N(6)-dimethylallyladenosine synthase (444 aa).

The region spanning 6 to 124 (KTFKIITYGC…LPQLIEEIKA (119 aa)) is the MTTase N-terminal domain. [4Fe-4S] cluster contacts are provided by Cys15, Cys51, Cys85, Cys161, Cys165, and Cys168. Residues 147-377 (RARGAQAFVT…MELQNSISLA (231 aa)) form the Radical SAM core domain. Residues 380 to 443 (EALVGQEVEV…TWLLKGEMVD (64 aa)) enclose the TRAM domain.

The protein belongs to the methylthiotransferase family. MiaB subfamily. Monomer. Requires [4Fe-4S] cluster as cofactor.

It is found in the cytoplasm. It catalyses the reaction N(6)-dimethylallyladenosine(37) in tRNA + (sulfur carrier)-SH + AH2 + 2 S-adenosyl-L-methionine = 2-methylsulfanyl-N(6)-dimethylallyladenosine(37) in tRNA + (sulfur carrier)-H + 5'-deoxyadenosine + L-methionine + A + S-adenosyl-L-homocysteine + 2 H(+). In terms of biological role, catalyzes the methylthiolation of N6-(dimethylallyl)adenosine (i(6)A), leading to the formation of 2-methylthio-N6-(dimethylallyl)adenosine (ms(2)i(6)A) at position 37 in tRNAs that read codons beginning with uridine. The polypeptide is tRNA-2-methylthio-N(6)-dimethylallyladenosine synthase (Moorella thermoacetica (strain ATCC 39073 / JCM 9320)).